We begin with the raw amino-acid sequence, 766 residues long: Dipeptidyl peptidase 4 (766 aa).

The Cytoplasmic portion of the chain corresponds to 1–6 (MKTPWK). The chain crosses the membrane as a helical; Signal-anchor for type II membrane protein span at residues 7–27 (VLLGLLGIAALVTVITVPVVL). At 28-766 (LNKGTDDAAA…HFLKQCFSLP (739 aa)) the chain is on the extracellular side. Residues Asn85, Asn92, Asn150, Asn179, Asn219, Asn229, Asn279, and Asn321 are each glycosylated (N-linked (GlcNAc...) asparagine). 3 disulfide bridges follow: Cys385-Cys394, Cys444-Cys447, and Cys454-Cys472. Ser630 (charge relay system) is an active-site residue. A disulfide bond links Cys649 and Cys762. Asn685 carries an N-linked (GlcNAc...) asparagine glycan. Active-site charge relay system residues include Asp708 and His740.

Belongs to the peptidase S9B family. DPPIV subfamily. Monomer. Homodimer. Heterodimer with Seprase (FAP). Requires homodimerization for optimal dipeptidyl peptidase activity and T-cell costimulation. Found in a membrane raft complex, at least composed of BCL10, CARD11, DPP4 and IKBKB. Associates with collagen. Interacts with PTPRC; the interaction is enhanced in an interleukin-12-dependent manner in activated lymphocytes. Interacts (via extracellular domain) with ADA; does not inhibit its dipeptidyl peptidase activity. Interacts with CAV1 (via the N-terminus); the interaction is direct. Interacts (via cytoplasmic tail) with CARD11 (via PDZ domain); its homodimerization is necessary for interaction with CARD11. Interacts with IGF2R; the interaction is direct. Interacts with GPC3. The soluble form (Dipeptidyl peptidase 4 soluble form also named SDPP) derives from the membrane form (Dipeptidyl peptidase 4 membrane form also named MDPP) by proteolytic processing. Post-translationally, N- and O-Glycosylated. In terms of processing, phosphorylated. Mannose 6-phosphate residues in the carbohydrate moiety are necessary for interaction with IGF2R in activated T-cells. Mannose 6-phosphorylation is induced during T-cell activation.

The protein localises to the secreted. It is found in the cell membrane. The protein resides in the apical cell membrane. Its subcellular location is the cell projection. It localises to the invadopodium membrane. The protein localises to the lamellipodium membrane. It is found in the cell junction. The protein resides in the membrane raft. It carries out the reaction Release of an N-terminal dipeptide, Xaa-Yaa-|-Zaa-, from a polypeptide, preferentially when Yaa is Pro, provided Zaa is neither Pro nor hydroxyproline.. Its activity is regulated as follows. Inhibited by GPC3 and diprotin A. In terms of biological role, cell surface glycoprotein receptor involved in the costimulatory signal essential for T-cell receptor (TCR)-mediated T-cell activation. Acts as a positive regulator of T-cell coactivation, by binding at least ADA, CAV1, IGF2R, and PTPRC. Its binding to CAV1 and CARD11 induces T-cell proliferation and NF-kappa-B activation in a T-cell receptor/CD3-dependent manner. Its interaction with ADA also regulates lymphocyte-epithelial cell adhesion. In association with FAP is involved in the pericellular proteolysis of the extracellular matrix (ECM), the migration and invasion of endothelial cells into the ECM. May be involved in the promotion of lymphatic endothelial cells adhesion, migration and tube formation. When overexpressed, enhanced cell proliferation, a process inhibited by GPC3. Also acts as a serine exopeptidase with a dipeptidyl peptidase activity that regulates various physiological processes by cleaving peptides in the circulation, including many chemokines, mitogenic growth factors, neuropeptides and peptide hormones such as brain natriuretic peptide 32. Removes N-terminal dipeptides sequentially from polypeptides having unsubstituted N-termini provided that the penultimate residue is proline. This Sus scrofa (Pig) protein is Dipeptidyl peptidase 4 (DPP4).